Reading from the N-terminus, the 176-residue chain is Acireductone dioxygenase (176 aa).

Residues His-100, His-102, Glu-106, and His-145 each contribute to the Fe(2+) site. The Ni(2+) site is built by His-100, His-102, Glu-106, and His-145.

The protein belongs to the acireductone dioxygenase (ARD) family. As to quaternary structure, monomer. Fe(2+) is required as a cofactor. Ni(2+) serves as cofactor.

It catalyses the reaction 1,2-dihydroxy-5-(methylsulfanyl)pent-1-en-3-one + O2 = 3-(methylsulfanyl)propanoate + CO + formate + 2 H(+). The enzyme catalyses 1,2-dihydroxy-5-(methylsulfanyl)pent-1-en-3-one + O2 = 4-methylsulfanyl-2-oxobutanoate + formate + 2 H(+). It participates in amino-acid biosynthesis; L-methionine biosynthesis via salvage pathway; L-methionine from S-methyl-5-thio-alpha-D-ribose 1-phosphate: step 5/6. In terms of biological role, catalyzes 2 different reactions between oxygen and the acireductone 1,2-dihydroxy-3-keto-5-methylthiopentene (DHK-MTPene) depending upon the metal bound in the active site. Fe-containing acireductone dioxygenase (Fe-ARD) produces formate and 2-keto-4-methylthiobutyrate (KMTB), the alpha-ketoacid precursor of methionine in the methionine recycle pathway. Ni-containing acireductone dioxygenase (Ni-ARD) produces methylthiopropionate, carbon monoxide and formate, and does not lie on the methionine recycle pathway. The chain is Acireductone dioxygenase from Bacillus pumilus (strain SAFR-032).